A 301-amino-acid polypeptide reads, in one-letter code: Homoserine O-acetyltransferase (301 aa).

Cysteine 142 serves as the catalytic Acyl-thioester intermediate. 2 residues coordinate substrate: lysine 163 and serine 192. Catalysis depends on histidine 235, which acts as the Proton acceptor. Glutamate 237 is a catalytic residue. Arginine 249 is a substrate binding site.

The protein belongs to the MetA family.

It localises to the cytoplasm. The catalysed reaction is L-homoserine + acetyl-CoA = O-acetyl-L-homoserine + CoA. Its pathway is amino-acid biosynthesis; L-methionine biosynthesis via de novo pathway; O-acetyl-L-homoserine from L-homoserine: step 1/1. Functionally, transfers an acetyl group from acetyl-CoA to L-homoserine, forming acetyl-L-homoserine. This chain is Homoserine O-acetyltransferase, found in Bacillus cereus (strain ATCC 14579 / DSM 31 / CCUG 7414 / JCM 2152 / NBRC 15305 / NCIMB 9373 / NCTC 2599 / NRRL B-3711).